Consider the following 493-residue polypeptide: Probable GTP-binding protein OBGM, mitochondrial (493 aa).

A mitochondrion-targeting transit peptide spans 1–28 (MWLIRAIVPVRYLGSYKRPQKPPWMRNP). One can recognise an Obg domain in the interval 48–303 (TRMRDRFTLY…AVLILELKSI (256 aa)). Disordered regions lie at residues 65–89 (SGCSSVRRSRADRYGKPDGGNGGRG) and 146–215 (GEIP…EDDD). Over residues 187–196 (SESDQDDTEQ) the composition is skewed to acidic residues. In terms of domain architecture, OBG-type G spans 304-476 (ADVGLVGMPN…LKDGLKMLVD (173 aa)). GTP-binding positions include 310–317 (GMPNAGKS) and 356–360 (DIPGL).

Belongs to the TRAFAC class OBG-HflX-like GTPase superfamily. OBG GTPase family.

The protein localises to the mitochondrion. In terms of biological role, may bind GTP and have GTPase activity. The sequence is that of Probable GTP-binding protein OBGM, mitochondrial (ATOBGM) from Arabidopsis thaliana (Mouse-ear cress).